Here is a 418-residue protein sequence, read N- to C-terminus: Putative ion-transport protein YfeO (418 aa).

12 consecutive transmembrane segments (helical) span residues 10 to 30 (LLLS…LIVV), 54 to 74 (DSPL…GLVI), 99 to 119 (ALPG…SLGP), 120 to 140 (EHPI…RLLP), 149 to 169 (ILAS…AALI), 186 to 206 (LFAP…FFHP), 223 to 243 (ILSG…AVWC), 258 to 278 (VLVL…GGPV), 300 to 320 (DYFL…ASGF), 322 to 342 (GGRI…LHEH), 343 to 363 (VPAV…VLVV), and 371 to 391 (LFMA…CIVM).

Belongs to the chloride channel (TC 2.A.49) family.

Its subcellular location is the cell membrane. The polypeptide is Putative ion-transport protein YfeO (Escherichia coli O8 (strain IAI1)).